Consider the following 427-residue polypeptide: 3-phosphoshikimate 1-carboxyvinyltransferase (427 aa).

3-phosphoshikimate is bound by residues lysine 22, serine 23, and arginine 27. Lysine 22 is a binding site for phosphoenolpyruvate. The phosphoenolpyruvate site is built by glycine 96 and arginine 124. 7 residues coordinate 3-phosphoshikimate: serine 169, serine 170, glutamine 171, serine 197, aspartate 313, asparagine 336, and lysine 340. A phosphoenolpyruvate-binding site is contributed by glutamine 171. The active-site Proton acceptor is the aspartate 313. Residues arginine 344, arginine 386, and lysine 411 each contribute to the phosphoenolpyruvate site.

The protein belongs to the EPSP synthase family. As to quaternary structure, monomer.

The protein localises to the cytoplasm. The enzyme catalyses 3-phosphoshikimate + phosphoenolpyruvate = 5-O-(1-carboxyvinyl)-3-phosphoshikimate + phosphate. It functions in the pathway metabolic intermediate biosynthesis; chorismate biosynthesis; chorismate from D-erythrose 4-phosphate and phosphoenolpyruvate: step 6/7. In terms of biological role, catalyzes the transfer of the enolpyruvyl moiety of phosphoenolpyruvate (PEP) to the 5-hydroxyl of shikimate-3-phosphate (S3P) to produce enolpyruvyl shikimate-3-phosphate and inorganic phosphate. This is 3-phosphoshikimate 1-carboxyvinyltransferase from Salmonella typhimurium (strain LT2 / SGSC1412 / ATCC 700720).